Reading from the N-terminus, the 168-residue chain is Crossover junction endodeoxyribonuclease RuvC (168 aa).

Active-site residues include Asp-10, Glu-70, and Asp-143. Residues Asp-10, Glu-70, and Asp-143 each contribute to the Mg(2+) site.

It belongs to the RuvC family. Homodimer which binds Holliday junction (HJ) DNA. The HJ becomes 2-fold symmetrical on binding to RuvC with unstacked arms; it has a different conformation from HJ DNA in complex with RuvA. In the full resolvosome a probable DNA-RuvA(4)-RuvB(12)-RuvC(2) complex forms which resolves the HJ. It depends on Mg(2+) as a cofactor.

It localises to the cytoplasm. It catalyses the reaction Endonucleolytic cleavage at a junction such as a reciprocal single-stranded crossover between two homologous DNA duplexes (Holliday junction).. Functionally, the RuvA-RuvB-RuvC complex processes Holliday junction (HJ) DNA during genetic recombination and DNA repair. Endonuclease that resolves HJ intermediates. Cleaves cruciform DNA by making single-stranded nicks across the HJ at symmetrical positions within the homologous arms, yielding a 5'-phosphate and a 3'-hydroxyl group; requires a central core of homology in the junction. The consensus cleavage sequence is 5'-(A/T)TT(C/G)-3'. Cleavage occurs on the 3'-side of the TT dinucleotide at the point of strand exchange. HJ branch migration catalyzed by RuvA-RuvB allows RuvC to scan DNA until it finds its consensus sequence, where it cleaves and resolves the cruciform DNA. This is Crossover junction endodeoxyribonuclease RuvC from Roseiflexus sp. (strain RS-1).